A 407-amino-acid chain; its full sequence is Eukaryotic initiation factor 4A-II (407 aa).

Positions 1–23 (MSGGSADYSRDHGGPEGMEPDGV) are disordered. The short motif at 33-61 (DNFDDMNLKESLLRGIYAYGFEKPSAIQQ) is the Q motif element. In terms of domain architecture, Helicase ATP-binding spans 64 to 235 (IIPCIKGYDV…KKFMREPIRI (172 aa)). Residue 77–84 (AQSGTGKT) participates in ATP binding. Residues 183–186 (DEAD) carry the DEAD box motif. In terms of domain architecture, Helicase C-terminal spans 246–407 (GIKQFYINVE…EMPMNVADLI (162 aa)).

The protein belongs to the DEAD box helicase family. eIF4A subfamily. EIF4F is a multi-subunit complex, the composition of which varies with external and internal environmental conditions. It is composed of at least EIF4A, EIF4E and EIF4G1/EIFFG3. Interacts with EIF4E.

It catalyses the reaction ATP + H2O = ADP + phosphate + H(+). Its function is as follows. ATP-dependent RNA helicase which is a subunit of the eIF4F complex involved in cap recognition and is required for mRNA binding to ribosome. In the current model of translation initiation, eIF4A unwinds RNA secondary structures in the 5'-UTR of mRNAs which is necessary to allow efficient binding of the small ribosomal subunit, and subsequent scanning for the initiator codon. The chain is Eukaryotic initiation factor 4A-II (EIF4A2) from Gallus gallus (Chicken).